The sequence spans 129 residues: Histone H2A-IV (129 aa).

The disordered stretch occupies residues 1–22 (MSGRGKQGGKARAKAKSRSSRA). Ser-2 bears the N-acetylserine mark. Phosphoserine is present on Ser-2. An N6-(2-hydroxyisobutyryl)lysine modification is found at Lys-6. An N6-acetyllysine mark is found at Lys-6 and Lys-10. Positions 7–19 (QGGKARAKAKSRS) are enriched in basic residues. N6-(2-hydroxyisobutyryl)lysine; alternate is present on Lys-10. Lys-10 is modified (N6-lactoyllysine; alternate). Position 10 is an N6-succinyllysine (Lys-10). Glycyl lysine isopeptide (Lys-Gly) (interchain with G-Cter in ubiquitin) cross-links involve residues Lys-14 and Lys-16. Lys-37 carries the post-translational modification N6-(2-hydroxyisobutyryl)lysine; alternate. 2 positions are modified to N6-(2-hydroxyisobutyryl)lysine: Lys-75 and Lys-76. Lys-96 carries the post-translational modification N6-(2-hydroxyisobutyryl)lysine; alternate. Lys-96 is subject to N6-succinyllysine. Position 96 is an N6-glutaryllysine; alternate (Lys-96). Lys-100 is modified (N6-glutaryllysine). The residue at position 105 (Gln-105) is an N5-methylglutamine. Lys-119 is subject to N6-(2-hydroxyisobutyryl)lysine; alternate. An N6-glutaryllysine; alternate mark is found at Lys-119 and Lys-120. Residue Lys-120 forms a Glycyl lysine isopeptide (Lys-Gly) (interchain with G-Cter in ubiquitin) linkage.

This sequence belongs to the histone H2A family. As to quaternary structure, the nucleosome is a histone octamer containing two molecules each of H2A, H2B, H3 and H4 assembled in one H3-H4 heterotetramer and two H2A-H2B heterodimers. The octamer wraps approximately 147 bp of DNA. In terms of processing, monoubiquitination of Lys-120 (H2AK119Ub) gives a specific tag for epigenetic transcriptional repression. Following DNA double-strand breaks (DSBs), it is ubiquitinated through 'Lys-63' linkage of ubiquitin moieties, leading to the recruitment of repair proteins to sites of DNA damage. H2AK119Ub and ionizing radiation-induced 'Lys-63'-linked ubiquitination are distinct events. Phosphorylation on Ser-2 is enhanced during mitosis. Phosphorylation on Ser-2 directly represses transcription. Post-translationally, glutamine methylation at Gln-105 (H2AQ104me) by FBL is specifically dedicated to polymerase I. It is present at 35S ribosomal DNA locus and impairs binding of the FACT complex.

It localises to the nucleus. Its subcellular location is the chromosome. Functionally, core component of nucleosome. Nucleosomes wrap and compact DNA into chromatin, limiting DNA accessibility to the cellular machineries which require DNA as a template. Histones thereby play a central role in transcription regulation, DNA repair, DNA replication and chromosomal stability. DNA accessibility is regulated via a complex set of post-translational modifications of histones, also called histone code, and nucleosome remodeling. This Gallus gallus (Chicken) protein is Histone H2A-IV.